A 219-amino-acid chain; its full sequence is 2-phospho-L-lactate guanylyltransferase (219 aa).

Belongs to the CofC family. In terms of assembly, homodimer.

It catalyses the reaction (2S)-2-phospholactate + GTP + H(+) = (2S)-lactyl-2-diphospho-5'-guanosine + diphosphate. The protein operates within cofactor biosynthesis; coenzyme F420 biosynthesis. In terms of biological role, guanylyltransferase that catalyzes the activation of (2S)-2-phospholactate (2-PL) as (2S)-lactyl-2-diphospho-5'-guanosine, via the condensation of 2-PL with GTP. It is involved in the biosynthesis of coenzyme F420, a hydride carrier cofactor. In Methanocaldococcus vulcanius (strain ATCC 700851 / DSM 12094 / M7) (Methanococcus vulcanius), this protein is 2-phospho-L-lactate guanylyltransferase.